A 253-amino-acid polypeptide reads, in one-letter code: MITNTAAYQFAPIHDPQQLADSVLERAQQRALKGSVLVAEEGINLFLAGDAEQIASFYAWLHADARFAQMRVKYSHSAEQPFARLKVKVKPEIISFRRDDASPLQGRAPSVAPAVLRKWMQQGHDDHGRPLVLLDTRNAQEVAYGTFQGALTLPIDKFTELPEALQPHRAALADATVVSFCTGGIRCEKAALWMHAEGMDNVLQLEGGILGYFEDVGGEGYDGRCFVFDERVALDAELRPLVDGAACADAGKI.

The 95-residue stretch at 127-221 folds into the Rhodanese domain; the sequence is HGRPLVLLDT…YFEDVGGEGY (95 aa). Catalysis depends on Cys181, which acts as the Cysteine persulfide intermediate.

The protein belongs to the TrhO family.

The enzyme catalyses uridine(34) in tRNA + AH2 + O2 = 5-hydroxyuridine(34) in tRNA + A + H2O. In terms of biological role, catalyzes oxygen-dependent 5-hydroxyuridine (ho5U) modification at position 34 in tRNAs. The protein is tRNA uridine(34) hydroxylase of Xanthomonas campestris pv. campestris (strain 8004).